A 1342-amino-acid chain; its full sequence is DNA-directed RNA polymerase subunit beta (1342 aa).

N6-acetyllysine occurs at positions 1022 and 1200.

It belongs to the RNA polymerase beta chain family. In terms of assembly, the RNAP catalytic core consists of 2 alpha, 1 beta, 1 beta' and 1 omega subunit. When a sigma factor is associated with the core the holoenzyme is formed, which can initiate transcription.

It catalyses the reaction RNA(n) + a ribonucleoside 5'-triphosphate = RNA(n+1) + diphosphate. DNA-dependent RNA polymerase catalyzes the transcription of DNA into RNA using the four ribonucleoside triphosphates as substrates. The polypeptide is DNA-directed RNA polymerase subunit beta (Escherichia coli O139:H28 (strain E24377A / ETEC)).